Consider the following 241-residue polypeptide: MAANLEDVPSMELMTELLRRMKCSSKPDKRVILVGPPGCGKGTQSPLIKDEFCLCHLATGDMLRAAVAAKTPLGIKAKEAMDKGELVSDDLVVGIIDEAMKKTSCQKGFILDGFPRTVVQAQKLDEMLAKQGTKIDKVLNFAIDDAILEERITGRWIHPSSGRSYHTKFAPPKTPGLDDVTGEPLIQRKDDTAAVLKSRLEAFHVQTKPVIDYYTKKGIVANLHAEKPPKEVTVEVQKALS.

38-43 (GCGKGT) provides a ligand contact to ATP. The interval 58–87 (ATGDMLRAAVAAKTPLGIKAKEAMDKGELV) is NMP. AMP is bound by residues T59, R64, 85–87 (ELV), 113–116 (GFPR), and Q120. The tract at residues 154 to 191 (GRWIHPSSGRSYHTKFAPPKTPGLDDVTGEPLIQRKDD) is LID. R155 is a binding site for ATP. Positions 188 and 199 each coordinate AMP.

It belongs to the adenylate kinase family.

The protein localises to the cytoplasm. It catalyses the reaction AMP + ATP = 2 ADP. Its function is as follows. Catalyzes the reversible transfer of the terminal phosphate group between ATP and AMP. Plays an important role in cellular energy homeostasis and in adenine nucleotide metabolism. This is Adenylate kinase 3 (ADK-A) from Oryza sativa subsp. japonica (Rice).